The following is a 481-amino-acid chain: WD repeat-containing protein 55 homolog (481 aa).

The tract at residues 1-116 is disordered; sequence MHTHNHFKTP…NRDVETNFDL (116 aa). Composition is skewed to acidic residues over residues 12-23, 31-46, and 68-81; these read DAEEVDDLDDEM, IEQE…DDGF, and DSFD…DSDD. WD repeat units follow at residues 144 to 183, 188 to 227, 231 to 269, 272 to 311, 314 to 353, and 398 to 437; these read KLED…NKLI, VHSK…LKKL, AHDD…HVFE, QIDD…LYVQ, PYEE…YHCD, and QHNM…DFGD.

This sequence belongs to the WD repeat WDR55 family.

In Drosophila ananassae (Fruit fly), this protein is WD repeat-containing protein 55 homolog.